The sequence spans 422 residues: Putative acid phosphatase 5 (422 aa).

A signal peptide spans 1-13; sequence MLLLLVLLIGASG. The Nucleophile role is filled by histidine 40. Asparagine 104, asparagine 210, and asparagine 218 each carry an N-linked (GlcNAc...) asparagine glycan. Disulfide bonds link cysteine 152/cysteine 363, cysteine 205/cysteine 302, and cysteine 338/cysteine 342. Residue aspartate 279 is the Proton donor of the active site. Residues asparagine 312 and asparagine 323 are each glycosylated (N-linked (GlcNAc...) asparagine).

This sequence belongs to the histidine acid phosphatase family.

It carries out the reaction a phosphate monoester + H2O = an alcohol + phosphate. This chain is Putative acid phosphatase 5 (pho-5), found in Caenorhabditis elegans.